A 211-amino-acid polypeptide reads, in one-letter code: Uridine kinase (211 aa).

13 to 20 (GASASGKS) is a binding site for ATP.

Belongs to the uridine kinase family.

The protein localises to the cytoplasm. It catalyses the reaction uridine + ATP = UMP + ADP + H(+). The catalysed reaction is cytidine + ATP = CMP + ADP + H(+). The protein operates within pyrimidine metabolism; CTP biosynthesis via salvage pathway; CTP from cytidine: step 1/3. It participates in pyrimidine metabolism; UMP biosynthesis via salvage pathway; UMP from uridine: step 1/1. This is Uridine kinase from Shewanella pealeana (strain ATCC 700345 / ANG-SQ1).